The sequence spans 346 residues: MGYEILGLPMAYYIAMVLKVLVVFVFVLLTVAYATYAERKIIGHMQVRLGPMRTGWHGLLQPIADGVKLFFKEEIIPSKADKFAFLIAPLIALVPAFIGFAVIPFGETIEVGGYKIPLQIAAYYDTASGQVVDLNVGVLYILALASIGVYGIVLAGWSSNSKYSLLGGLRSSAQMISYELAAGLAIISVFMLSESLSLQKIVADQANGAWYAFKQPLAFILFFICSIAEINRTPFDLPEAETELVSGFCTEYSSMKYAMFFMAEYANMVTVCAVTTTLFLGGWHGPSFLPGWFWFIAKVYFLIFTCMWIRATYPRYRYDQLMRLGWKVFLPLTLINIVVTGIIVSL.

The next 8 membrane-spanning stretches (helical) occupy residues 14 to 34, 83 to 103, 136 to 156, 172 to 192, 208 to 228, 260 to 280, 289 to 309, and 324 to 344; these read IAMV…VAYA, FAFL…FAVI, VGVL…VLAG, SAQM…VFML, GAWY…CSIA, FFMA…TLFL, LPGW…CMWI, and LGWK…GIIV.

It belongs to the complex I subunit 1 family. As to quaternary structure, NDH-1 is composed of 14 different subunits. Subunits NuoA, H, J, K, L, M, N constitute the membrane sector of the complex.

Its subcellular location is the cell inner membrane. It catalyses the reaction a quinone + NADH + 5 H(+)(in) = a quinol + NAD(+) + 4 H(+)(out). In terms of biological role, NDH-1 shuttles electrons from NADH, via FMN and iron-sulfur (Fe-S) centers, to quinones in the respiratory chain. The immediate electron acceptor for the enzyme in this species is believed to be ubiquinone. Couples the redox reaction to proton translocation (for every two electrons transferred, four hydrogen ions are translocated across the cytoplasmic membrane), and thus conserves the redox energy in a proton gradient. This subunit may bind ubiquinone. The sequence is that of NADH-quinone oxidoreductase subunit H 2 from Geobacter metallireducens (strain ATCC 53774 / DSM 7210 / GS-15).